The primary structure comprises 219 residues: MLITFEGIDGAGKSTQIKKLQTVLNKAGVESVTLREPGGTEVAEKIRSILLESRHEISAVGELLLFSATRAELVQQVIIPALQTDAVVILDRFYDSTRAYQGYGRGIDLTILETIIAFSTFNLIPDVTFYLDIKPEDAMIRKNSKKSLPLAFENSDLDRMERSGLEFYSKVRNGYFEIIRSEQHRFKVLNALEHPDDLHRQILETLRKKKPALKALNRY.

An ATP-binding site is contributed by 7–14; it reads GIDGAGKS.

Belongs to the thymidylate kinase family.

It catalyses the reaction dTMP + ATP = dTDP + ADP. Phosphorylation of dTMP to form dTDP in both de novo and salvage pathways of dTTP synthesis. The sequence is that of Thymidylate kinase from Chlorobium phaeobacteroides (strain DSM 266 / SMG 266 / 2430).